A 644-amino-acid chain; its full sequence is Chaperone protein DnaK (644 aa).

T199 carries the post-translational modification Phosphothreonine; by autocatalysis. Residues 605–644 (KKSSEGQAAQGQTQSQESTKPAEEGVVDAEFEEVKEEDKK) are disordered. The segment covering 609–623 (EGQAAQGQTQSQEST) has biased composition (polar residues). Positions 629-644 (GVVDAEFEEVKEEDKK) are enriched in acidic residues.

This sequence belongs to the heat shock protein 70 family.

Acts as a chaperone. The protein is Chaperone protein DnaK of Legionella pneumophila subsp. pneumophila (strain Philadelphia 1 / ATCC 33152 / DSM 7513).